The following is a 299-amino-acid chain: Coenzyme PQQ synthesis protein B (299 aa).

This sequence belongs to the PqqB family.

Its pathway is cofactor biosynthesis; pyrroloquinoline quinone biosynthesis. Functionally, may be involved in the transport of PQQ or its precursor to the periplasm. The polypeptide is Coenzyme PQQ synthesis protein B (Methylobacterium nodulans (strain LMG 21967 / CNCM I-2342 / ORS 2060)).